Consider the following 42-residue polypeptide: Photosystem I reaction center subunit IX (42 aa).

A helical transmembrane segment spans residues 7-27 (YLSVAPVLSTLWFGALAGLLI).

This sequence belongs to the PsaJ family.

It is found in the plastid. Its subcellular location is the chloroplast thylakoid membrane. In terms of biological role, may help in the organization of the PsaE and PsaF subunits. The sequence is that of Photosystem I reaction center subunit IX from Agrostis stolonifera (Creeping bentgrass).